We begin with the raw amino-acid sequence, 74 residues long: ATP synthase subunit c (74 aa).

The next 2 membrane-spanning stretches (helical) occupy residues 5–25 (LAYI…LGVG) and 49–69 (LFIG…VALL).

This sequence belongs to the ATPase C chain family. F-type ATPases have 2 components, F(1) - the catalytic core - and F(0) - the membrane proton channel. F(1) has five subunits: alpha(3), beta(3), gamma(1), delta(1), epsilon(1). F(0) has three main subunits: a(1), b(2) and c(10-14). The alpha and beta chains form an alternating ring which encloses part of the gamma chain. F(1) is attached to F(0) by a central stalk formed by the gamma and epsilon chains, while a peripheral stalk is formed by the delta and b chains.

Its subcellular location is the cell inner membrane. F(1)F(0) ATP synthase produces ATP from ADP in the presence of a proton or sodium gradient. F-type ATPases consist of two structural domains, F(1) containing the extramembraneous catalytic core and F(0) containing the membrane proton channel, linked together by a central stalk and a peripheral stalk. During catalysis, ATP synthesis in the catalytic domain of F(1) is coupled via a rotary mechanism of the central stalk subunits to proton translocation. Functionally, key component of the F(0) channel; it plays a direct role in translocation across the membrane. A homomeric c-ring of between 10-14 subunits forms the central stalk rotor element with the F(1) delta and epsilon subunits. This is ATP synthase subunit c from Ruegeria sp. (strain TM1040) (Silicibacter sp.).